Reading from the N-terminus, the 332-residue chain is Polyprenyl transferase yanG (332 aa).

Transmembrane regions (helical) follow at residues 42–62, 72–92, 145–165, 170–190, 200–220, 242–262, 266–286, and 300–320; these read IWGA…LAFA, VTAT…FFVV, PAVT…PFMK, FPQV…WVGV, ALPL…FYAT, VKIL…MTAL, LSLI…PWHV, and VFKA…LELV.

It belongs to the UbiA prenyltransferase family. The cofactor is Mg(2+).

It localises to the membrane. It participates in secondary metabolite biosynthesis; terpenoid biosynthesis. Functionally, polyprenyl transferase; part of the gene cluster that mediates the biosynthesis of yanuthone D, a fungal isoprenoid epoxycyclohexenone that acts as an antibiotic against fungi and bacteria. The first step of the pathway is the synthesis of 6-methylsalicylic acid (6-MSA) by the polyketide synthase yanA. 6-MSA is then converted to m-cresol by the decarboxylase yanB. The cytochrome P450 monooxygenase yanC then catalyzes the oxidation of m-cresol to toluquinol. Epoxidation of toluquinol is then performed by the short chain dehydrogenase yanD, with the help of yanE, and a further prenylation by yanG leads to 7-deacetoxyyanuthone A. The next step is the hydroxylation of C-22 of 7-deacetoxyyanuthone A by the cytochrome P450 monooxygenase yanH to yield 22-deacetylyanuthone A. O-Mevalon transferase yanI then attaches mevalon to the hydroxyl group of 22-deacetylyanuthone A to produce yanuthone E. Finally, the FAD-dependent monooxygenase yanF oxidizes the hydroxyl group at C15 of yanuthone E to form yanuthone D. Furthermore, several branching points in the pathway lead to the production of yanuthones F and G from 7-deacetoxyyanuthone A; yanuthones H and I from 22-deacetylyanuthone A; and yanuthone J from yanuthone E. YanG is also involved in the synthesis of yanuthone X1 which does not have 6-methylsalicylic acid (6-MSA) as precursor. This Aspergillus niger (strain ATCC 1015 / CBS 113.46 / FGSC A1144 / LSHB Ac4 / NCTC 3858a / NRRL 328 / USDA 3528.7) protein is Polyprenyl transferase yanG.